The sequence spans 76 residues: ATP synthase subunit 9, mitochondrial (76 aa).

The next 2 membrane-spanning stretches (helical) occupy residues 14–34 (IATIGLLGAGIGIAIVFAALI) and 52–72 (ILGFALSEATGLFCLMISFLL).

The protein belongs to the ATPase C chain family. In terms of assembly, F-type ATPases have 2 components, CF(1) - the catalytic core - and CF(0) - the membrane proton channel. CF(1) has five subunits: alpha(3), beta(3), gamma(1), delta(1), epsilon(1). CF(0) has three main subunits: a, b and c.

It is found in the mitochondrion membrane. Mitochondrial membrane ATP synthase (F(1)F(0) ATP synthase or Complex V) produces ATP from ADP in the presence of a proton gradient across the membrane which is generated by electron transport complexes of the respiratory chain. F-type ATPases consist of two structural domains, F(1) - containing the extramembraneous catalytic core and F(0) - containing the membrane proton channel, linked together by a central stalk and a peripheral stalk. During catalysis, ATP synthesis in the catalytic domain of F(1) is coupled via a rotary mechanism of the central stalk subunits to proton translocation. Part of the complex F(0) domain. A homomeric c-ring of probably 10 subunits is part of the complex rotary element. This is ATP synthase subunit 9, mitochondrial (ATP9) from Wickerhamomyces canadensis (Yeast).